A 64-amino-acid polypeptide reads, in one-letter code: UPF0337 protein SAB0772 (64 aa).

Residues 1–40 (MADESKFEQAKGNVKETIGNVTDNKNLENEGKEDKASGKA) form a disordered region. The span at 25 to 40 (KNLENEGKEDKASGKA) shows a compositional bias: basic and acidic residues.

The protein belongs to the UPF0337 (CsbD) family.

The chain is UPF0337 protein SAB0772 from Staphylococcus aureus (strain bovine RF122 / ET3-1).